The following is a 395-amino-acid chain: GPI-anchor transamidase (395 aa).

Residues 1–27 form the signal peptide; it reads MAAPCFLTLRVATLAALALLSLGSSAA. Residues 28–368 are Lumenal-facing; the sequence is GHIEDQAEQF…PKPRDWHPPG (341 aa). 4 residues coordinate Ca(2+): Asp-79, Ile-82, Glu-118, and Asp-120. His-164 serves as the catalytic Proton donor. Cys-206 acts as the Nucleophile; acyl-thioester intermediate in catalysis. Cys-206, Ser-232, and Ser-234 together coordinate a protein. The autoinhibitory loop stretch occupies residues 231–236; it reads DSLSHQ. A disulfide bridge links Cys-275 with Cys-280. Residues 369–385 form a helical membrane-spanning segment; sequence GFILGLWALIIMVFFKT. Residues 386–395 lie on the Cytoplasmic side of the membrane; that stretch reads YGIKHMKFIF.

It belongs to the peptidase C13 family. Heteropentamer. Part of the GPI-anchor transamidase complex, consisting of PIGK, PIGT, PIGS, PIGU and GAA1. Interacts with GPAA1. Interacts with PIGT; this interaction, via a disulfide link, stabilizes the expression of GAA1 and PIGK and links them to PIGS. In terms of processing, the disulfide bond between PIGK/GPI8 and PIGT is important for normal enzyme activity.

It localises to the endoplasmic reticulum membrane. It functions in the pathway glycolipid biosynthesis; glycosylphosphatidylinositol-anchor biosynthesis. With respect to regulation, in the absence of proproteins substrates, exists in an inactive state with a disrupted catalytic site by an autoinhibitory loop. The binding of proprotein substrates, particularly the CSP region, to GPI-T triggers concerted conformational changes that alleviate the inhibition by the autoinhibitory loop. Meanwhile, proprotein residues near the omega- site induce the formation of a catalytic cleft for catalysis, following which the products are released and GPI-T reverts to the inactive state. Catalytic subunit of the glycosylphosphatidylinositol-anchor (GPI-anchor) transamidase (GPI-T) complex that catalyzes the formation of the linkage between a proprotein and a GPI-anchor and participates in GPI anchored protein biosynthesis. Recognizes diverse proproteins at a C-terminal signal peptide (CSP) region that lacks consensus sequence and replaces it with a GPI-anchor via a transamidation reaction. Transamidation catalysis reaction follows a two-phase mechanism. In the acyl-enzyme phase, the carbonyl group of the proproteins's omega-site undergoes a nucleophilic attack forming an enzyme-substrate thioester bond. Followed by a general acid catalysis that allows CSP releasing, regenerating the carbonyl, and forming the acyl-enzyme intermediate. In the GPI-anchor attachment phase, the amino group of the GPI-anchor's ethanolamine phosphate, the one on third mannose (EtNP3), mediates a nucleophilic attack on the carbonyl of the acyl-enzyme intermediate, replacing the CSP, allowing GPI-anchor attachment to the omega-residue, therefore forming the product and freeing the enzyme. This Mus musculus (Mouse) protein is GPI-anchor transamidase.